A 397-amino-acid polypeptide reads, in one-letter code: Phosphoglycerate kinase (397 aa).

Substrate contacts are provided by residues 26–28 (DLN), arginine 42, 65–68 (HLGR), arginine 119, and arginine 152. Residues lysine 203, glutamate 325, and 351–354 (GGDT) each bind ATP.

Belongs to the phosphoglycerate kinase family. As to quaternary structure, monomer.

The protein resides in the cytoplasm. It carries out the reaction (2R)-3-phosphoglycerate + ATP = (2R)-3-phospho-glyceroyl phosphate + ADP. Its pathway is carbohydrate degradation; glycolysis; pyruvate from D-glyceraldehyde 3-phosphate: step 2/5. The sequence is that of Phosphoglycerate kinase from Bordetella bronchiseptica (strain ATCC BAA-588 / NCTC 13252 / RB50) (Alcaligenes bronchisepticus).